We begin with the raw amino-acid sequence, 170 residues long: Adenine phosphoribosyltransferase (170 aa).

The protein belongs to the purine/pyrimidine phosphoribosyltransferase family. As to quaternary structure, homodimer.

Its subcellular location is the cytoplasm. It catalyses the reaction AMP + diphosphate = 5-phospho-alpha-D-ribose 1-diphosphate + adenine. Its pathway is purine metabolism; AMP biosynthesis via salvage pathway; AMP from adenine: step 1/1. Functionally, catalyzes a salvage reaction resulting in the formation of AMP, that is energically less costly than de novo synthesis. The protein is Adenine phosphoribosyltransferase of Geobacillus sp. (strain WCH70).